The following is a 568-amino-acid chain: MHGLSRLGNGSSNGRINIPSPSPPSSPRIRHTRGKSLAGGVYKQGLGERLVFLLFSIVFRRKGVLLLAPLLYIAGMLLFMGSFGFTVLDLGHGVEIVYRRGSPGSVYRSPKVFKRLWPVMEADVNGSSHNVLMEAWKPRVKSVWKPCISTNVSAAGSNSNGYFIIEANGGLNQQRLSICDAVAVAGLLNATLVIPIFHLNSVWRDSSKFGDIFDEDFFIYALSKNVNVVKELPKDVLERYNYNISSIVNLRLKAWSSPAYYLQKVLPQLLRLGAVRVAPFSNRLAHAVPAHIQGLRCLANFEALRFAEPIRLLAEKMVDRMVTKSVESGGKYVSVHLRFEMDMVAFSCCEYDFGQAEKLEMDMARERGWKGKFRRRGRVIRPGANRIDGKCPLTPLEVGMMLRGMGFNNSTLVYVAAGNIYKADKYMAPLRQMFPLLQTKDTLATPEELAPFKGHSSRLAALDYTVCLHSEVFVSTQGGNFPHFLIGHRRYLYKGHAETIKPDKRKLVQLLDKPSIRWDYFKKQMQDMLRHNDAKGVELRKPAASLYTFPMPDCMCKEPDPEPETDPA.

Positions 1-19 (MHGLSRLGNGSSNGRINIP) are enriched in low complexity. The disordered stretch occupies residues 1-33 (MHGLSRLGNGSSNGRINIPSPSPPSSPRIRHTR). The chain crosses the membrane as a helical; Signal-anchor for type II membrane protein span at residues 65–85 (LLLAPLLYIAGMLLFMGSFGF). Asn-125, Asn-151, Asn-189, and Asn-243 each carry an N-linked (GlcNAc...) asparagine glycan. 336 to 338 (HLR) serves as a coordination point for substrate. Residues Asn-408 and Asn-409 are each glycosylated (N-linked (GlcNAc...) asparagine).

This sequence belongs to the glycosyltransferase GT106 family.

Its subcellular location is the membrane. Its pathway is glycan metabolism. The sequence is that of O-fucosyltransferase 9 from Arabidopsis thaliana (Mouse-ear cress).